The sequence spans 349 residues: MTATASASSVSGSLGRNELPPHLDENLLTPRFYTTEFDKAAKTDLEIARRDFQAMFNEMEADYNLKHFDRKASLARLNELSPKDKSVYESYLVRSVVSEFSGFLLFKEISNRFKKAKRPELGQFFQFLARDEARHAGFLGRALKEEGINIDLPNLPKKRAATFFPLSWVLYSLYLSEKIGYWRYILINRHLKAHPDKACAPLFDFFEPWCQDENRHGDCINMMMRCWPGMTKGFRGKILSRFFLWTVFLTHTLTVCERGDFYELLAIDPVKFDEEVIIQTNNTSKNAFPWVYNFEDGRFLEMRKEILNAFRSWRKASKLSKPIHFLKFVSLIARQFALPMEKTQAVRYS.

The interval 1–22 is disordered; it reads MTATASASSVSGSLGRNELPPH.

It belongs to the AcsF family. Fe cation is required as a cofactor.

It catalyses the reaction Mg-protoporphyrin IX 13-monomethyl ester + 3 NADPH + 3 O2 + 2 H(+) = 3,8-divinyl protochlorophyllide a + 3 NADP(+) + 5 H2O. Its pathway is porphyrin-containing compound metabolism; chlorophyll biosynthesis (light-independent). Its function is as follows. Catalyzes the formation of the isocyclic ring in chlorophyll biosynthesis. Mediates the cyclase reaction, which results in the formation of divinylprotochlorophyllide (Pchlide) characteristic of all chlorophylls from magnesium-protoporphyrin IX 13-monomethyl ester (MgPMME). The polypeptide is Magnesium-protoporphyrin IX monomethyl ester [oxidative] cyclase (Prochlorococcus marinus (strain MIT 9211)).